Reading from the N-terminus, the 1775-residue chain is Protein TIC 214 (1775 aa).

The next 6 membrane-spanning stretches (helical) occupy residues 19 to 39 (IINS…FSIG), 68 to 88 (FIAG…HLAL), 91 to 111 (PHTI…WNNH), 133 to 153 (VFLN…SSML), 176 to 196 (VGWL…LVWI), and 227 to 247 (IFSI…PSPI). The segment at 1491 to 1512 (KESAGQGERESDNEKKKNLESA) is disordered.

It belongs to the TIC214 family. In terms of assembly, part of the Tic complex.

Its subcellular location is the plastid. It localises to the chloroplast inner membrane. Involved in protein precursor import into chloroplasts. May be part of an intermediate translocation complex acting as a protein-conducting channel at the inner envelope. The sequence is that of Protein TIC 214 from Lobularia maritima (Sweet alyssum).